We begin with the raw amino-acid sequence, 495 residues long: Aspartyl/glutamyl-tRNA(Asn/Gln) amidotransferase subunit B (495 aa).

It belongs to the GatB/GatE family. GatB subfamily. As to quaternary structure, heterotrimer of A, B and C subunits.

It carries out the reaction L-glutamyl-tRNA(Gln) + L-glutamine + ATP + H2O = L-glutaminyl-tRNA(Gln) + L-glutamate + ADP + phosphate + H(+). The catalysed reaction is L-aspartyl-tRNA(Asn) + L-glutamine + ATP + H2O = L-asparaginyl-tRNA(Asn) + L-glutamate + ADP + phosphate + 2 H(+). Its function is as follows. Allows the formation of correctly charged Asn-tRNA(Asn) or Gln-tRNA(Gln) through the transamidation of misacylated Asp-tRNA(Asn) or Glu-tRNA(Gln) in organisms which lack either or both of asparaginyl-tRNA or glutaminyl-tRNA synthetases. The reaction takes place in the presence of glutamine and ATP through an activated phospho-Asp-tRNA(Asn) or phospho-Glu-tRNA(Gln). The protein is Aspartyl/glutamyl-tRNA(Asn/Gln) amidotransferase subunit B of Methanosarcina barkeri (strain Fusaro / DSM 804).